A 131-amino-acid chain; its full sequence is Phosphoribosyl-AMP cyclohydrolase (131 aa).

A Mg(2+)-binding site is contributed by Asp78. Cys79 is a Zn(2+) binding site. Mg(2+)-binding residues include Asp80 and Asp82. Zn(2+) contacts are provided by Cys96 and Cys103.

This sequence belongs to the PRA-CH family. Homodimer. Requires Mg(2+) as cofactor. Zn(2+) is required as a cofactor.

The protein localises to the cytoplasm. The catalysed reaction is 1-(5-phospho-beta-D-ribosyl)-5'-AMP + H2O = 1-(5-phospho-beta-D-ribosyl)-5-[(5-phospho-beta-D-ribosylamino)methylideneamino]imidazole-4-carboxamide. The protein operates within amino-acid biosynthesis; L-histidine biosynthesis; L-histidine from 5-phospho-alpha-D-ribose 1-diphosphate: step 3/9. Its function is as follows. Catalyzes the hydrolysis of the adenine ring of phosphoribosyl-AMP. The protein is Phosphoribosyl-AMP cyclohydrolase of Neisseria gonorrhoeae (strain ATCC 700825 / FA 1090).